A 473-amino-acid polypeptide reads, in one-letter code: Zinc finger and BTB domain-containing protein 9 (473 aa).

Residues 48–112 (CDVSLLVQGR…IYSGRLRLPL (65 aa)) form the BTB domain. The interval 177-279 (QTPVQSSAST…LELPAPPALP (103 aa)) is disordered. The segment covering 182–196 (SSASTESPASTESPV) has biased composition (low complexity). Residues 211-226 (VEEEEEEEEDDDDEDQ) are compositionally biased toward acidic residues. Polar residues predominate over residues 227–239 (GSATLSQTPQPQR). A Glycyl lysine isopeptide (Lys-Gly) (interchain with G-Cter in SUMO1); alternate cross-link involves residue Lys286. A Glycyl lysine isopeptide (Lys-Gly) (interchain with G-Cter in SUMO2); alternate cross-link involves residue Lys286. Residues Lys293 and Lys307 each participate in a glycyl lysine isopeptide (Lys-Gly) (interchain with G-Cter in SUMO2) cross-link. Residues 293 to 376 (KEEISGSGTQ…VHGPVKLGGT (84 aa)) are disordered. Over residues 355-364 (SGGGGPGGAG) the composition is skewed to gly residues. A Glycyl lysine isopeptide (Lys-Gly) (interchain with G-Cter in SUMO2) cross-link involves residue Lys382. The segment at 411–433 (FGCGICNKRFKLKHHLTEHMKTH) adopts a C2H2-type 1 zinc-finger fold. The segment at 438-460 (HACPHCGRRFRVHACFLRHRDLC) adopts a C2H2-type 2; atypical zinc-finger fold.

Its subcellular location is the nucleus. In terms of biological role, may be involved in transcriptional regulation. This chain is Zinc finger and BTB domain-containing protein 9 (ZBTB9), found in Homo sapiens (Human).